Reading from the N-terminus, the 156-residue chain is Small ribosomal subunit protein uS7 (156 aa).

The protein belongs to the universal ribosomal protein uS7 family. In terms of assembly, part of the 30S ribosomal subunit. Contacts proteins S9 and S11.

In terms of biological role, one of the primary rRNA binding proteins, it binds directly to 16S rRNA where it nucleates assembly of the head domain of the 30S subunit. Is located at the subunit interface close to the decoding center, probably blocks exit of the E-site tRNA. The sequence is that of Small ribosomal subunit protein uS7 from Rhodococcus erythropolis (strain PR4 / NBRC 100887).